The chain runs to 94 residues: Small ribosomal subunit protein bS6 (94 aa).

The protein belongs to the bacterial ribosomal protein bS6 family.

Its function is as follows. Binds together with bS18 to 16S ribosomal RNA. The chain is Small ribosomal subunit protein bS6 from Clostridium botulinum (strain 657 / Type Ba4).